We begin with the raw amino-acid sequence, 455 residues long: Tubulin alpha-1 chain (455 aa).

GTP-binding residues include Gln-11, Glu-75, Ser-144, Gly-148, Thr-149, Thr-183, Asn-210, and Asn-232. Glu-75 lines the Mg(2+) pocket. Glu-258 is an active-site residue.

This sequence belongs to the tubulin family. As to quaternary structure, dimer of alpha and beta chains. A typical microtubule is a hollow water-filled tube with an outer diameter of 25 nm and an inner diameter of 15 nM. Alpha-beta heterodimers associate head-to-tail to form protofilaments running lengthwise along the microtubule wall with the beta-tubulin subunit facing the microtubule plus end conferring a structural polarity. Microtubules usually have 13 protofilaments but different protofilament numbers can be found in some organisms and specialized cells. Mg(2+) serves as cofactor.

It is found in the cytoplasm. It localises to the cytoskeleton. The enzyme catalyses GTP + H2O = GDP + phosphate + H(+). Its function is as follows. Tubulin is the major constituent of microtubules, a cylinder consisting of laterally associated linear protofilaments composed of alpha- and beta-tubulin heterodimers. Microtubules grow by the addition of GTP-tubulin dimers to the microtubule end, where a stabilizing cap forms. Below the cap, tubulin dimers are in GDP-bound state, owing to GTPase activity of alpha-tubulin. The chain is Tubulin alpha-1 chain (nda2) from Schizosaccharomyces pombe (strain 972 / ATCC 24843) (Fission yeast).